A 250-amino-acid polypeptide reads, in one-letter code: Leucyl/phenylalanyl-tRNA--protein transferase (250 aa).

This sequence belongs to the L/F-transferase family.

It localises to the cytoplasm. It carries out the reaction N-terminal L-lysyl-[protein] + L-leucyl-tRNA(Leu) = N-terminal L-leucyl-L-lysyl-[protein] + tRNA(Leu) + H(+). The enzyme catalyses N-terminal L-arginyl-[protein] + L-leucyl-tRNA(Leu) = N-terminal L-leucyl-L-arginyl-[protein] + tRNA(Leu) + H(+). The catalysed reaction is L-phenylalanyl-tRNA(Phe) + an N-terminal L-alpha-aminoacyl-[protein] = an N-terminal L-phenylalanyl-L-alpha-aminoacyl-[protein] + tRNA(Phe). Functionally, functions in the N-end rule pathway of protein degradation where it conjugates Leu, Phe and, less efficiently, Met from aminoacyl-tRNAs to the N-termini of proteins containing an N-terminal arginine or lysine. The protein is Leucyl/phenylalanyl-tRNA--protein transferase of Cupriavidus taiwanensis (strain DSM 17343 / BCRC 17206 / CCUG 44338 / CIP 107171 / LMG 19424 / R1) (Ralstonia taiwanensis (strain LMG 19424)).